Reading from the N-terminus, the 647-residue chain is Knirps-related protein (647 aa).

A DNA-binding region (nuclear receptor) is located at residues 11 to 87 (NQTCKVCGEP…VGMSKSGSRY (77 aa)). NR C4-type zinc fingers lie at residues 14–34 (CKVC…CEGC) and 51–75 (CKNN…LKKC). Disordered regions lie at residues 111 to 142 (MAAH…KGMS), 196 to 274 (HKHP…LSPF), 340 to 383 (GAGQ…LLTN), and 402 to 600 (SQQQ…NSIL). The span at 120-134 (AGGGSSGGSGGGQGM) shows a compositional bias: gly residues. 2 stretches are compositionally biased toward low complexity: residues 200 to 223 (VVAS…VSSV) and 232 to 247 (GGKS…ADGS). The segment covering 248–260 (HSGGGGGGGGGVT) has biased composition (gly residues). Polar residues-rich tracts occupy residues 370-381 (SPSTHANNNHLL) and 420-432 (DYSI…PNSE). 2 stretches are compositionally biased toward basic and acidic residues: residues 433 to 443 (SGRERVKSRQN) and 480 to 491 (QEERTPAGEDPR). Residues 502 to 519 (LSMKTTGSSLSSKSSSPE) show a composition bias toward low complexity. Residues 520-541 (IEPETEISSDVEKNDTDDDDED) are compositionally biased toward acidic residues. A compositionally biased stretch (basic and acidic residues) spans 542–556 (LKVTPEEEISVRETA). Polar residues predominate over residues 567–579 (TTETAKTSIENTH). Residues 580-599 (NNNNSISNNNNNNNNNNNSI) show a composition bias toward low complexity.

The protein belongs to the nuclear hormone receptor family. NR0 subfamily.

The protein localises to the nucleus. In Drosophila melanogaster (Fruit fly), this protein is Knirps-related protein (knrl).